Consider the following 958-residue polypeptide: Atromentin synthetase greA (958 aa).

Residues serine 60 to valine 465 are adenylation (A) domain. The region spanning alanine 597 to leucine 675 is the Carrier domain. The segment at threonine 602–asparagine 672 is thiolation and peptide carrier (T) domain. Serine 634 bears the O-(pantetheine 4'-phosphoryl)serine mark. Positions proline 698–glutamine 946 are thioesterase (TE) domain.

The protein belongs to the ATP-dependent AMP-binding enzyme family.

The protein operates within secondary metabolite biosynthesis. Its function is as follows. An L-tyrosine:2-oxoglutarate aminotransferase and atromentin synthetase greA catalyze consecutive steps to turn over L-tyrosine into atromentin, which represents the generic precursor molecule for the entire terphenylquinone and pulvinic acid family of pigments, which are widely distributed secondary metabolites in homobasidiomycetes. The first step catalyzed by the aminotransferase converts L-tyrosine in to 4-hydroxyphenylpyruvate (4-HPP). Adenylation of two 4-HPP monomers by the greA adenylation (A) domain, covalent tethering of the monomers as a thioester and oxoester onto the greA thiolation (T) and thioesterase (TE) domains, respectively, and symmetric C-C-bond formation between two monomers catalyzed by the greA TE domain leads to atromentin. This chain is Atromentin synthetase greA (greA), found in Suillus grevillei (Larch bolete).